Here is a 622-residue protein sequence, read N- to C-terminus: Microtubule-associated protein 70-1 (622 aa).

The tract at residues 1 to 27 (MSDVSADGGFLSAEQATTPVAIPTPYP) is disordered. Positions 66-365 (DPVKVELNRL…LAISDRAAKS (300 aa)) form a coiled coil. Residues 250 to 483 (ILDRMHRQKV…YSFNKACDET (234 aa)) are required for targeting to microtubules. 2 disordered regions span residues 388-512 (SSIS…TEDN) and 579-622 (AAMR…RSTQ). 2 stretches are compositionally biased toward polar residues: residues 400 to 425 (SMSNGPSRRQSIGGSDNLQKFASNGF) and 432 to 453 (MRNSFTSNSTSVLKNAKGTSKS). Composition is skewed to basic and acidic residues over residues 479 to 501 (ACDETKESESPNTWKEDSEEKPP) and 579 to 591 (AAMRVDKDQDNRA). Residues 541 to 590 (DKDDAIEMLAKKVETLTKAMEVEAKKMRREVAAMEKEVAAMRVDKDQDNR) adopt a coiled-coil conformation. Over residues 594 to 605 (SSNTKPSSNTAQ) the composition is skewed to polar residues.

It belongs to the MAP70 family. Interacts with MAP70.5 and itself.

It is found in the cytoplasm. The protein localises to the cytoskeleton. The protein resides in the phragmoplast. It localises to the spindle. In terms of biological role, plant-specific protein that interact with microtubules. In association with MAP70.5, is essential for the normal banding pattern of secondary cell wall and for the proper development of xylem tracheary elements and wood formation. The polypeptide is Microtubule-associated protein 70-1 (MAP70.1) (Arabidopsis thaliana (Mouse-ear cress)).